Consider the following 61-residue polypeptide: Large ribosomal subunit protein uL30 (61 aa).

It belongs to the universal ribosomal protein uL30 family. As to quaternary structure, part of the 50S ribosomal subunit.

This is Large ribosomal subunit protein uL30 from Chromobacterium violaceum (strain ATCC 12472 / DSM 30191 / JCM 1249 / CCUG 213 / NBRC 12614 / NCIMB 9131 / NCTC 9757 / MK).